Consider the following 422-residue polypeptide: Tryptophan synthase beta chain (422 aa).

Position 111 is an N6-(pyridoxal phosphate)lysine (Lys111).

This sequence belongs to the TrpB family. Tetramer of two alpha and two beta chains. Pyridoxal 5'-phosphate is required as a cofactor.

It catalyses the reaction (1S,2R)-1-C-(indol-3-yl)glycerol 3-phosphate + L-serine = D-glyceraldehyde 3-phosphate + L-tryptophan + H2O. It participates in amino-acid biosynthesis; L-tryptophan biosynthesis; L-tryptophan from chorismate: step 5/5. In terms of biological role, the beta subunit is responsible for the synthesis of L-tryptophan from indole and L-serine. The chain is Tryptophan synthase beta chain from Pseudothermotoga lettingae (strain ATCC BAA-301 / DSM 14385 / NBRC 107922 / TMO) (Thermotoga lettingae).